The primary structure comprises 379 residues: Armadillo repeat-containing X-linked protein 3 (379 aa).

Residues 1–6 (MGYARK) lie on the Mitochondrial intermembrane side of the membrane. Mitochondrion outer membrane (MOM)-targeting sequence regions lie at residues 1–6 (MGYARK) and 26–37 (RLTRGRKQNKEK). Residues 7–29 (VGWVTAGLVIGAGACYCIYRLTR) form a helical; Signal-anchor membrane-spanning segment. Residues 30 to 379 (GRKQNKEKMA…TERMFPKSQE (350 aa)) lie on the Cytoplasmic side of the membrane. Phosphoserine is present on residues S61, S67, and S72. A nuclear localization signal region spans residues 89-98 (RARARARARA). Positions 95-106 (RARATRARRAVQ) are enriched in basic residues. Residues 95-116 (RARATRARRAVQKRASPNSDDT) form a disordered region. S110 bears the Phosphoserine mark. ARM repeat units lie at residues 111 to 151 (PNSD…NNAA), 153 to 192 (AFNR…NLSV), and 233 to 272 (VTNE…NLAE).

Belongs to the eutherian X-chromosome-specific Armcx family. As to quaternary structure, interacts (via ARM domain) with MIRO1, MIRO2 and TRAK2. The interaction with Miro is calcium-dependent. Interacts with Sox10. In terms of tissue distribution, highly expressed in the developing neural tissues, neural crest derivatives and hind limbs. Also widely expressed in the adult nervous tissue, especially in the forebrain, including the cerebral cortex, hippocampus and thalamus.

Its subcellular location is the mitochondrion outer membrane. It is found in the cytoplasm. The protein resides in the nucleus. Its function is as follows. Regulates mitochondrial aggregation and transport in axons in living neurons. May link mitochondria to the Trak2-kinesin motor complex via its interaction with Miro and Trak2. Mitochondrial distribution and dynamics is regulated through Armcx3 protein degradation, which is promoted by PCK and negatively regulated by Wnt1. Enhances the Sox10-mediated transactivation of the neuronal acetylcholine receptor subunit alpha-3 and beta-4 subunit gene promoters. The protein is Armadillo repeat-containing X-linked protein 3 (Armcx3) of Mus musculus (Mouse).